Consider the following 307-residue polypeptide: 1D-myo-inositol 2-acetamido-2-deoxy-alpha-D-glucopyranoside deacetylase 1 (307 aa).

His-21, Asp-24, and His-157 together coordinate Zn(2+).

It belongs to the MshB deacetylase family. It depends on Zn(2+) as a cofactor.

The enzyme catalyses 1D-myo-inositol 2-acetamido-2-deoxy-alpha-D-glucopyranoside + H2O = 1D-myo-inositol 2-amino-2-deoxy-alpha-D-glucopyranoside + acetate. Its function is as follows. Catalyzes the deacetylation of 1D-myo-inositol 2-acetamido-2-deoxy-alpha-D-glucopyranoside (GlcNAc-Ins) in the mycothiol biosynthesis pathway. This is 1D-myo-inositol 2-acetamido-2-deoxy-alpha-D-glucopyranoside deacetylase 1 from Frankia casuarinae (strain DSM 45818 / CECT 9043 / HFP020203 / CcI3).